Here is an 88-residue protein sequence, read N- to C-terminus: Small ribosomal subunit protein uS15 (88 aa).

It belongs to the universal ribosomal protein uS15 family. As to quaternary structure, part of the 30S ribosomal subunit. Forms a bridge to the 50S subunit in the 70S ribosome, contacting the 23S rRNA.

One of the primary rRNA binding proteins, it binds directly to 16S rRNA where it helps nucleate assembly of the platform of the 30S subunit by binding and bridging several RNA helices of the 16S rRNA. Its function is as follows. Forms an intersubunit bridge (bridge B4) with the 23S rRNA of the 50S subunit in the ribosome. This Polaromonas sp. (strain JS666 / ATCC BAA-500) protein is Small ribosomal subunit protein uS15.